The sequence spans 321 residues: Malate dehydrogenase (321 aa).

Residues 10 to 15 (GSGMIG) and D34 contribute to the NAD(+) site. Substrate-binding residues include R83 and R89. NAD(+) contacts are provided by residues N96 and 119–121 (ITN). 2 residues coordinate substrate: N121 and R152. H176 acts as the Proton acceptor in catalysis.

Belongs to the LDH/MDH superfamily. MDH type 3 family.

It carries out the reaction (S)-malate + NAD(+) = oxaloacetate + NADH + H(+). Functionally, catalyzes the reversible oxidation of malate to oxaloacetate. The polypeptide is Malate dehydrogenase (Sinorhizobium fredii (strain NBRC 101917 / NGR234)).